A 691-amino-acid polypeptide reads, in one-letter code: Elongation factor G (691 aa).

Residues 8 to 282 (ERVRNIGIAA…AVVDYLPAPI (275 aa)) form the tr-type G domain. Residues 17–24 (AHIDAGKT), 81–85 (DTPGH), and 135–138 (NKMD) each bind GTP.

Belongs to the TRAFAC class translation factor GTPase superfamily. Classic translation factor GTPase family. EF-G/EF-2 subfamily.

The protein localises to the cytoplasm. Functionally, catalyzes the GTP-dependent ribosomal translocation step during translation elongation. During this step, the ribosome changes from the pre-translocational (PRE) to the post-translocational (POST) state as the newly formed A-site-bound peptidyl-tRNA and P-site-bound deacylated tRNA move to the P and E sites, respectively. Catalyzes the coordinated movement of the two tRNA molecules, the mRNA and conformational changes in the ribosome. This is Elongation factor G from Synechococcus sp. (strain CC9311).